The following is a 356-amino-acid chain: Probable dual-specificity RNA methyltransferase RlmN (356 aa).

The active-site Proton acceptor is Glu100. A Radical SAM core domain is found at 106–340 (TNSRLTTCVS…VSLRASRGLD (235 aa)). Cys113 and Cys345 are joined by a disulfide. The [4Fe-4S] cluster site is built by Cys120, Cys124, and Cys127. Residues 167-168 (GE), Ser197, 226-228 (SLH), and Asn302 each bind S-adenosyl-L-methionine. Cys345 acts as the S-methylcysteine intermediate in catalysis.

The protein belongs to the radical SAM superfamily. RlmN family. [4Fe-4S] cluster serves as cofactor.

Its subcellular location is the cytoplasm. It carries out the reaction adenosine(2503) in 23S rRNA + 2 reduced [2Fe-2S]-[ferredoxin] + 2 S-adenosyl-L-methionine = 2-methyladenosine(2503) in 23S rRNA + 5'-deoxyadenosine + L-methionine + 2 oxidized [2Fe-2S]-[ferredoxin] + S-adenosyl-L-homocysteine. The enzyme catalyses adenosine(37) in tRNA + 2 reduced [2Fe-2S]-[ferredoxin] + 2 S-adenosyl-L-methionine = 2-methyladenosine(37) in tRNA + 5'-deoxyadenosine + L-methionine + 2 oxidized [2Fe-2S]-[ferredoxin] + S-adenosyl-L-homocysteine. Its function is as follows. Specifically methylates position 2 of adenine 2503 in 23S rRNA and position 2 of adenine 37 in tRNAs. This Prochlorococcus marinus (strain MIT 9211) protein is Probable dual-specificity RNA methyltransferase RlmN.